Reading from the N-terminus, the 235-residue chain is uncharacterized protein (235 aa).

This sequence to E.coli YbeR.

This is an uncharacterized protein from Escherichia coli (strain K12).